The primary structure comprises 198 residues: Phosphoheptose isomerase (198 aa).

The 163-residue stretch at 36-198 (MIGSLLNNGK…DCLLLGVEDQ (163 aa)) folds into the SIS domain. 51–53 (NGG) provides a ligand contact to substrate. His60 and Glu64 together coordinate Zn(2+). Residues Glu64, 93-94 (ND), 119-121 (STS), Ser124, and Gln174 contribute to the substrate site. Zn(2+) is bound by residues Gln174 and His182.

Belongs to the SIS family. GmhA subfamily. As to quaternary structure, homotetramer. The cofactor is Zn(2+).

It localises to the cytoplasm. It catalyses the reaction 2 D-sedoheptulose 7-phosphate = D-glycero-alpha-D-manno-heptose 7-phosphate + D-glycero-beta-D-manno-heptose 7-phosphate. It functions in the pathway carbohydrate biosynthesis; D-glycero-D-manno-heptose 7-phosphate biosynthesis; D-glycero-alpha-D-manno-heptose 7-phosphate and D-glycero-beta-D-manno-heptose 7-phosphate from sedoheptulose 7-phosphate: step 1/1. Its function is as follows. Catalyzes the isomerization of sedoheptulose 7-phosphate in D-glycero-D-manno-heptose 7-phosphate. This Aromatoleum aromaticum (strain DSM 19018 / LMG 30748 / EbN1) (Azoarcus sp. (strain EbN1)) protein is Phosphoheptose isomerase.